The sequence spans 450 residues: Tubulin alpha chain (450 aa).

Residue Gln11 coordinates GTP. Lys40 is modified (N6-acetyllysine). 7 residues coordinate GTP: Glu71, Ser140, Gly144, Thr145, Thr179, Asn206, and Asn228. Glu71 contributes to the Mg(2+) binding site. The active site involves Glu254.

It belongs to the tubulin family. In terms of assembly, dimer of alpha and beta chains. A typical microtubule is a hollow water-filled tube with an outer diameter of 25 nm and an inner diameter of 15 nM. Alpha-beta heterodimers associate head-to-tail to form protofilaments running lengthwise along the microtubule wall with the beta-tubulin subunit facing the microtubule plus end conferring a structural polarity. Microtubules usually have 13 protofilaments but different protofilament numbers can be found in some organisms and specialized cells. Mg(2+) serves as cofactor. Post-translationally, undergoes a tyrosination/detyrosination cycle, the cyclic removal and re-addition of a C-terminal tyrosine residue by the enzymes tubulin tyrosine carboxypeptidase (TTCP) and tubulin tyrosine ligase (TTL), respectively. Acetylation of alpha chains at Lys-40 stabilizes microtubules and affects affinity and processivity of microtubule motors. This modification has a role in multiple cellular functions, ranging from cell motility, cell cycle progression or cell differentiation to intracellular trafficking and signaling.

Its subcellular location is the cytoplasm. It is found in the cytoskeleton. The enzyme catalyses GTP + H2O = GDP + phosphate + H(+). Tubulin is the major constituent of microtubules, a cylinder consisting of laterally associated linear protofilaments composed of alpha- and beta-tubulin heterodimers. Microtubules grow by the addition of GTP-tubulin dimers to the microtubule end, where a stabilizing cap forms. Below the cap, tubulin dimers are in GDP-bound state, owing to GTPase activity of alpha-tubulin. This Haemonchus contortus (Barber pole worm) protein is Tubulin alpha chain.